The chain runs to 246 residues: MMIIPALDLIDGTVVRLHQGDYGKQRDYGNDPLPRLQDYAAQGAEVLHLVDLTGAKDPAKRQIPLIKTLVAGVNVPVQVGGGVRSEEDVAALLEAGVARVVVGSTAVKSPEMVKGWFERFGADALVLALDVRIDEQGNKQVAVSGWQENSGVSLEQLVETYLPVGLKHVLCTDISRDGTLAGSNVSLYEEVCARYPQVAFQSSGGIGDINDVAALRGTGVRGVIVGRALLEGKFTVKEAIACWQNA.

D8 functions as the Proton acceptor in the catalytic mechanism. Catalysis depends on D130, which acts as the Proton donor.

Belongs to the HisA/HisF family.

It is found in the cytoplasm. The catalysed reaction is 1-(5-phospho-beta-D-ribosyl)-5-[(5-phospho-beta-D-ribosylamino)methylideneamino]imidazole-4-carboxamide = 5-[(5-phospho-1-deoxy-D-ribulos-1-ylimino)methylamino]-1-(5-phospho-beta-D-ribosyl)imidazole-4-carboxamide. The protein operates within amino-acid biosynthesis; L-histidine biosynthesis; L-histidine from 5-phospho-alpha-D-ribose 1-diphosphate: step 4/9. This is 1-(5-phosphoribosyl)-5-[(5-phosphoribosylamino)methylideneamino] imidazole-4-carboxamide isomerase from Shigella dysenteriae serotype 1 (strain Sd197).